Reading from the N-terminus, the 480-residue chain is UDP-glucose 6-dehydrogenase 3 (480 aa).

Residues 8 to 13 (GAGYVG), D33, R38, 86 to 90 (VNTPT), 127 to 128 (ST), and E161 contribute to the NAD(+) site. Substrate is bound by residues 157–161 (EFLAE), 216–223 (KLAANAFL), and 256–269 (RIGP…VGFG). Catalysis depends on C272, which acts as the Nucleophile. NAD(+) is bound at residue 272 to 275 (CFQK). 334-335 (FK) contributes to the substrate binding site. Residue R342 participates in NAD(+) binding. R447 contributes to the substrate binding site.

Belongs to the UDP-glucose/GDP-mannose dehydrogenase family.

It carries out the reaction UDP-alpha-D-glucose + 2 NAD(+) + H2O = UDP-alpha-D-glucuronate + 2 NADH + 3 H(+). Its pathway is nucleotide-sugar biosynthesis; UDP-alpha-D-glucuronate biosynthesis; UDP-alpha-D-glucuronate from UDP-alpha-D-glucose: step 1/1. Its activity is regulated as follows. Inhibited by UDP-xylose. Involved in the biosynthesis of UDP-glucuronic acid (UDP-GlcA), providing nucleotide sugars for cell-wall polymers. Required for the formation of cell wall ingrowths on the outer cell walls of nematode-induced syncytia. In Arabidopsis thaliana (Mouse-ear cress), this protein is UDP-glucose 6-dehydrogenase 3 (UGD3).